A 432-amino-acid chain; its full sequence is UDP-glucosyltransferase B1 (432 aa).

The protein belongs to the UDP-glycosyltransferase family.

It carries out the reaction (9Z)-17-hydroxyoctadec-9-enoate 17-O-beta-D-glucoside + UDP-alpha-D-glucose = (9Z)-17-hydroxyoctadec-9-enoate 17-O-sophoroside + UDP + H(+). In terms of biological role, catalyzes the second glycosylation step of sophorolipid biosynthesis, the further glucosylation of the previoulsy formed glucolipid to give rise to an acidic sophorolipid. The protein is UDP-glucosyltransferase B1 of Starmerella bombicola (Yeast).